Here is a 719-residue protein sequence, read N- to C-terminus: Phosphoribosylformylglycinamidine synthase subunit PurL (719 aa).

Residue histidine 47 is part of the active site. ATP is bound by residues tyrosine 50 and lysine 89. Glutamate 91 lines the Mg(2+) pocket. Substrate is bound by residues 92-95 (SHNH) and arginine 114. The active-site Proton acceptor is the histidine 93. Mg(2+) is bound at residue aspartate 115. Glutamine 238 serves as a coordination point for substrate. Aspartate 266 serves as a coordination point for Mg(2+). 310–312 (ESQ) serves as a coordination point for substrate. Aspartate 488 and glycine 525 together coordinate ATP. Asparagine 526 provides a ligand contact to Mg(2+). Serine 528 lines the substrate pocket.

This sequence belongs to the FGAMS family. As to quaternary structure, monomer. Part of the FGAM synthase complex composed of 1 PurL, 1 PurQ and 2 PurS subunits.

It localises to the cytoplasm. The enzyme catalyses N(2)-formyl-N(1)-(5-phospho-beta-D-ribosyl)glycinamide + L-glutamine + ATP + H2O = 2-formamido-N(1)-(5-O-phospho-beta-D-ribosyl)acetamidine + L-glutamate + ADP + phosphate + H(+). The protein operates within purine metabolism; IMP biosynthesis via de novo pathway; 5-amino-1-(5-phospho-D-ribosyl)imidazole from N(2)-formyl-N(1)-(5-phospho-D-ribosyl)glycinamide: step 1/2. Part of the phosphoribosylformylglycinamidine synthase complex involved in the purines biosynthetic pathway. Catalyzes the ATP-dependent conversion of formylglycinamide ribonucleotide (FGAR) and glutamine to yield formylglycinamidine ribonucleotide (FGAM) and glutamate. The FGAM synthase complex is composed of three subunits. PurQ produces an ammonia molecule by converting glutamine to glutamate. PurL transfers the ammonia molecule to FGAR to form FGAM in an ATP-dependent manner. PurS interacts with PurQ and PurL and is thought to assist in the transfer of the ammonia molecule from PurQ to PurL. The sequence is that of Phosphoribosylformylglycinamidine synthase subunit PurL from Ruegeria pomeroyi (strain ATCC 700808 / DSM 15171 / DSS-3) (Silicibacter pomeroyi).